The following is a 263-amino-acid chain: Renal glandular kallikrein (263 aa).

The N-terminal stretch at 1–18 is a signal peptide; it reads MWFLILFLALFLGGIDAA. The propeptide at 19-24 is activation peptide; it reads PPVQSR. Positions 25-260 constitute a Peptidase S1 domain; it reads IIGGFNCEKN…YRSWIKDVMA (236 aa). Intrachain disulfides connect cysteine 31–cysteine 175, cysteine 50–cysteine 66, cysteine 153–cysteine 221, cysteine 186–cysteine 200, and cysteine 211–cysteine 236. The active-site Charge relay system is histidine 65. Residue asparagine 102 is glycosylated (N-linked (GlcNAc...) asparagine). Aspartate 121 serves as the catalytic Charge relay system. Catalysis depends on serine 215, which acts as the Charge relay system.

Belongs to the peptidase S1 family. Kallikrein subfamily.

The catalysed reaction is Preferential cleavage of Arg-|-Xaa bonds in small molecule substrates. Highly selective action to release kallidin (lysyl-bradykinin) from kininogen involves hydrolysis of Met-|-Xaa or Leu-|-Xaa.. Glandular kallikreins cleave Met-Lys and Arg-Ser bonds in kininogen to release Lys-bradykinin. This Mastomys natalensis (African soft-furred rat) protein is Renal glandular kallikrein.